We begin with the raw amino-acid sequence, 164 residues long: UPF0251 protein MA_0157 (164 aa).

Residues G91–R124 are disordered. A compositionally biased stretch (gly residues) spans D99–R115.

It belongs to the UPF0251 family.

The sequence is that of UPF0251 protein MA_0157 from Methanosarcina acetivorans (strain ATCC 35395 / DSM 2834 / JCM 12185 / C2A).